Reading from the N-terminus, the 53-residue chain is uncharacterized protein (53 aa).

This is an uncharacterized protein from Rickettsia conorii (strain ATCC VR-613 / Malish 7).